A 208-amino-acid polypeptide reads, in one-letter code: Uracil phosphoribosyltransferase (208 aa).

Residues Arg78, Arg103, and 130 to 138 each bind 5-phospho-alpha-D-ribose 1-diphosphate; that span reads DPMLATGGS. Residues Ile193 and 198-200 each bind uracil; that span reads GDA. Asp199 is a 5-phospho-alpha-D-ribose 1-diphosphate binding site.

It belongs to the UPRTase family. Mg(2+) is required as a cofactor.

The enzyme catalyses UMP + diphosphate = 5-phospho-alpha-D-ribose 1-diphosphate + uracil. The protein operates within pyrimidine metabolism; UMP biosynthesis via salvage pathway; UMP from uracil: step 1/1. Its activity is regulated as follows. Allosterically activated by GTP. In terms of biological role, catalyzes the conversion of uracil and 5-phospho-alpha-D-ribose 1-diphosphate (PRPP) to UMP and diphosphate. This Neisseria meningitidis serogroup B (strain ATCC BAA-335 / MC58) protein is Uracil phosphoribosyltransferase.